An 869-amino-acid polypeptide reads, in one-letter code: Bifunctional uridylyltransferase/uridylyl-removing enzyme (869 aa).

The tract at residues 1 to 332 (MTATPADRPD…QFDGEAVPVQ (332 aa)) is uridylyltransferase. Positions 333–691 (LDAGFSLRRG…RRAVPDNDAL (359 aa)) are uridylyl-removing. Positions 450 to 572 (VDQHTLMVLR…VGTRERLDYL (123 aa)) constitute an HD domain. 2 ACT domains span residues 692–771 (EVFV…PSRR) and 798–869 (RISL…LDPT).

The protein belongs to the GlnD family. Mg(2+) serves as cofactor.

It catalyses the reaction [protein-PII]-L-tyrosine + UTP = [protein-PII]-uridylyl-L-tyrosine + diphosphate. The enzyme catalyses [protein-PII]-uridylyl-L-tyrosine + H2O = [protein-PII]-L-tyrosine + UMP + H(+). With respect to regulation, uridylyltransferase (UTase) activity is inhibited by glutamine, while glutamine activates uridylyl-removing (UR) activity. Modifies, by uridylylation and deuridylylation, the PII regulatory proteins (GlnB and homologs), in response to the nitrogen status of the cell that GlnD senses through the glutamine level. Under low glutamine levels, catalyzes the conversion of the PII proteins and UTP to PII-UMP and PPi, while under higher glutamine levels, GlnD hydrolyzes PII-UMP to PII and UMP (deuridylylation). Thus, controls uridylylation state and activity of the PII proteins, and plays an important role in the regulation of nitrogen assimilation and metabolism. The polypeptide is Bifunctional uridylyltransferase/uridylyl-removing enzyme (Xanthomonas campestris pv. campestris (strain B100)).